The chain runs to 2290 residues: Protein Ycf2 (2290 aa).

Positions 505-530 are disordered; the sequence is GSNPTERSTRDQKSLKKQQDVSFVPP. Residues 511–523 show a composition bias toward basic and acidic residues; that stretch reads RSTRDQKSLKKQQ. Residue 1639-1646 coordinates ATP; that stretch reads GSIGTGRS.

Belongs to the Ycf2 family.

The protein localises to the plastid. It localises to the chloroplast stroma. Its function is as follows. Probable ATPase of unknown function. Its presence in a non-photosynthetic plant (Epifagus virginiana) and experiments in tobacco indicate that it has an essential function which is probably not related to photosynthesis. This is Protein Ycf2 from Ceratophyllum demersum (Rigid hornwort).